We begin with the raw amino-acid sequence, 600 residues long: Lamin-B2 (600 aa).

Residues 2 to 27 are head; sequence SGTPIRGTPGGTPLSPTRISRLQEKE. Ser16 carries the phosphoserine; by CDK1 modification. The IF rod domain occupies 25–381; the sequence is EKEELRQLND…KLLEGEEERL (357 aa). The tract at residues 28 to 64 is coil 1A; sequence ELRQLNDRLAVYIDRVRALELENDRLLVKISEKEEVT. Residues 75–212 are coil 1B; the sequence is YESELADARR…NVFEEEIRET (138 aa). Residues 237-379 form a coil 2 region; sequence QALEDLRNQH…YRKLLEGEEE (143 aa). Disordered regions lie at residues 377 to 449 and 568 to 600; these read EEER…QMSQ and ENEE…CLVM. The tail stretch occupies residues 380–600; it reads RLKLSPSPSS…RTTSRGCLVM (221 aa). The span at 383–410 shows a compositional bias: low complexity; it reads LSPSPSSRVTVSRATSSSSSSSTSLVRS. Position 386 is a phosphoserine (Ser386). Positions 414-419 match the Nuclear localization signal motif; the sequence is KRRRIE. One can recognise an LTD domain in the interval 445-562; the sequence is FQMSQQASAT…EEVAVRTVTK (118 aa). Positions 569-583 are enriched in acidic residues; that stretch reads NEEEEDEADFGEEDL. Over residues 584-600 the composition is skewed to polar residues; sequence FNQQGDPRTTSRGCLVM. A Cysteine methyl ester modification is found at Cys597. Residue Cys597 is the site of S-farnesyl cysteine attachment. The propeptide at 598–600 is removed in mature form; that stretch reads LVM.

This sequence belongs to the intermediate filament family. In terms of assembly, homodimer. Lamin dimers then assemble into dimeric head-to-tail polymers. Ultimately, two head-to-tail polymers assemble laterally into a protofilament with a uniformly shaped rod of 3.5 nm in diameter. Phosphorylation plays a key role in lamin organization, subcellular localization and nuclear envelope disintegration. Phosphorylation by CDK1 at Ser-16 at the onset of mitosis drives lamin disassembly and nuclear envelope breakdown.

It is found in the nucleus lamina. The protein localises to the nucleus envelope. Its subcellular location is the nucleus. It localises to the nucleoplasm. The protein resides in the nucleus matrix. Functionally, lamins are intermediate filament proteins that assemble into a filamentous meshwork, and which constitute the major components of the nuclear lamina, a fibrous layer on the nucleoplasmic side of the inner nuclear membrane. Lamins provide a framework for the nuclear envelope, bridging the nuclear envelope and chromatin. Plays an important role in nuclear assembly, chromatin organization, nuclear membrane and telomere dynamics. The polypeptide is Lamin-B2 (LMNB2) (Gallus gallus (Chicken)).